Reading from the N-terminus, the 145-residue chain is Large ribosomal subunit protein uL15 (145 aa).

Residues 1 to 43 form a disordered region; the sequence is MRLNTIKPGAGSKSAAKRVGRGIGSGLGKTCGRGHKGQKSRAG. The span at 21-31 shows a compositional bias: gly residues; sequence RGIGSGLGKTC.

Belongs to the universal ribosomal protein uL15 family. As to quaternary structure, part of the 50S ribosomal subunit.

Binds to the 23S rRNA. The sequence is that of Large ribosomal subunit protein uL15 from Aromatoleum aromaticum (strain DSM 19018 / LMG 30748 / EbN1) (Azoarcus sp. (strain EbN1)).